The following is a 209-amino-acid chain: Tektin bundle-interacting protein 1 (209 aa).

As to quaternary structure, microtubule inner protein component of sperm flagellar doublet microtubules.

The protein localises to the cytoplasm. It is found in the cytoskeleton. It localises to the cilium axoneme. The protein resides in the flagellum axoneme. Microtubule inner protein (MIP) part of the dynein-decorated doublet microtubules (DMTs) in cilia axoneme, which is required for motile cilia beating. Located at the center of the tektin bundle where may function to recruit tektins or stabilize the bundle. The sequence is that of Tektin bundle-interacting protein 1 (TEKTIP1) from Macaca fascicularis (Crab-eating macaque).